We begin with the raw amino-acid sequence, 266 residues long: Hydroxyethylthiazole kinase (266 aa).

Met44 serves as a coordination point for substrate. Lys120 and Thr166 together coordinate ATP. Gly193 lines the substrate pocket.

It belongs to the Thz kinase family. Mg(2+) serves as cofactor.

The enzyme catalyses 5-(2-hydroxyethyl)-4-methylthiazole + ATP = 4-methyl-5-(2-phosphooxyethyl)-thiazole + ADP + H(+). It participates in cofactor biosynthesis; thiamine diphosphate biosynthesis; 4-methyl-5-(2-phosphoethyl)-thiazole from 5-(2-hydroxyethyl)-4-methylthiazole: step 1/1. In terms of biological role, catalyzes the phosphorylation of the hydroxyl group of 4-methyl-5-beta-hydroxyethylthiazole (THZ). The protein is Hydroxyethylthiazole kinase of Syntrophomonas wolfei subsp. wolfei (strain DSM 2245B / Goettingen).